We begin with the raw amino-acid sequence, 153 residues long: Ribosome maturation factor RimP (153 aa).

It belongs to the RimP family.

The protein localises to the cytoplasm. Required for maturation of 30S ribosomal subunits. The chain is Ribosome maturation factor RimP from Vesicomyosocius okutanii subsp. Calyptogena okutanii (strain HA).